Here is a 49-residue protein sequence, read N- to C-terminus: MEKAEKGNPKGKAFRGNKLAFGEYGIQALDRAWITQQQIEAVRVALVRS.

It belongs to the universal ribosomal protein uL16 family. As to quaternary structure, part of the 50S ribosomal subunit.

Its function is as follows. Binds 23S rRNA and is also seen to make contacts with the A and possibly P site tRNAs. This is Large ribosomal subunit protein uL16 (rplP) from Aquifex pyrophilus.